Reading from the N-terminus, the 417-residue chain is Glutamate-1-semialdehyde 2,1-aminomutase (417 aa).

At lysine 267 the chain carries N6-(pyridoxal phosphate)lysine.

This sequence belongs to the class-III pyridoxal-phosphate-dependent aminotransferase family. HemL subfamily. Homodimer. The cofactor is pyridoxal 5'-phosphate.

It localises to the cytoplasm. It carries out the reaction (S)-4-amino-5-oxopentanoate = 5-aminolevulinate. It participates in porphyrin-containing compound metabolism; protoporphyrin-IX biosynthesis; 5-aminolevulinate from L-glutamyl-tRNA(Glu): step 2/2. The polypeptide is Glutamate-1-semialdehyde 2,1-aminomutase (Solibacter usitatus (strain Ellin6076)).